The following is a 471-amino-acid chain: Coronin-6 (471 aa).

WD repeat units follow at residues 79-119, 129-169, 173-212, 216-259, and 264-304; these read GHTG…PVRN, GHSK…VLLS, IHPDVIHSVCWNSNGSLLATTCKDKTLRIIDPRKSQVVAE, PHEG…EPVA, and DTSN…PFVH. Residues 410 to 433 form a disordered region; the sequence is ILDVRPPASPRRSQSASEAPLSQH. A compositionally biased stretch (low complexity) spans 419–429; it reads PRRSQSASEAP. A coiled-coil region spans residues 426 to 468; that stretch reads SEAPLSQHTLETLLEEIKALRDRVQAQEERITALENMLCELVD.

This is Coronin-6 (Coro6) from Mus musculus (Mouse).